The primary structure comprises 261 residues: Cytochrome c oxidase subunit 3 (261 aa).

Residues 1 to 15 (MAHQAHAYHMVDPSP) are Mitochondrial matrix-facing. Residues 16–34 (WPLTGAVAALLLTSGLAIW) traverse the membrane as a helical segment. At 35–40 (FPFNSL) the chain is on the mitochondrial intermembrane side. Residues 41 to 66 (ILLTLGLVLLLLTMYQWWRDIVREGT) traverse the membrane as a helical segment. Residues 67 to 72 (FQGHHT) are Mitochondrial matrix-facing. The helical transmembrane segment at 73-105 (PPVQKGLRYGMILFITSEVFFFLGFFWAFYHSS) threads the bilayer. Over 106-128 (LAPTPELGGCWPPTGIVPLNPFE) the chain is Mitochondrial intermembrane. A helical transmembrane segment spans residues 129–152 (VPLLNTAVLLASGVTVTWAHHSIM). Residues 153–155 (EGE) lie on the Mitochondrial matrix side of the membrane. Residues 156–183 (RKQAIHSLTLTILLGFYFTFLQAMEYYE) traverse the membrane as a helical segment. The Mitochondrial intermembrane segment spans residues 184–190 (APFTIAD). The helical transmembrane segment at 191–223 (GVYGSTFFVATGFHGLHVIIGSTFLAICLLRQI) threads the bilayer. The Mitochondrial matrix portion of the chain corresponds to 224–232 (RYHFTSEHH). Residues 233-256 (FGFEAAAWYWHFVDVVWLFLYISI) form a helical membrane-spanning segment. The Mitochondrial intermembrane portion of the chain corresponds to 257-261 (YWWGS).

It belongs to the cytochrome c oxidase subunit 3 family. In terms of assembly, component of the cytochrome c oxidase (complex IV, CIV), a multisubunit enzyme composed of 14 subunits. The complex is composed of a catalytic core of 3 subunits MT-CO1, MT-CO2 and MT-CO3, encoded in the mitochondrial DNA, and 11 supernumerary subunits COX4I, COX5A, COX5B, COX6A, COX6B, COX6C, COX7A, COX7B, COX7C, COX8 and NDUFA4, which are encoded in the nuclear genome. The complex exists as a monomer or a dimer and forms supercomplexes (SCs) in the inner mitochondrial membrane with NADH-ubiquinone oxidoreductase (complex I, CI) and ubiquinol-cytochrome c oxidoreductase (cytochrome b-c1 complex, complex III, CIII), resulting in different assemblies (supercomplex SCI(1)III(2)IV(1) and megacomplex MCI(2)III(2)IV(2)).

Its subcellular location is the mitochondrion inner membrane. The enzyme catalyses 4 Fe(II)-[cytochrome c] + O2 + 8 H(+)(in) = 4 Fe(III)-[cytochrome c] + 2 H2O + 4 H(+)(out). Component of the cytochrome c oxidase, the last enzyme in the mitochondrial electron transport chain which drives oxidative phosphorylation. The respiratory chain contains 3 multisubunit complexes succinate dehydrogenase (complex II, CII), ubiquinol-cytochrome c oxidoreductase (cytochrome b-c1 complex, complex III, CIII) and cytochrome c oxidase (complex IV, CIV), that cooperate to transfer electrons derived from NADH and succinate to molecular oxygen, creating an electrochemical gradient over the inner membrane that drives transmembrane transport and the ATP synthase. Cytochrome c oxidase is the component of the respiratory chain that catalyzes the reduction of oxygen to water. Electrons originating from reduced cytochrome c in the intermembrane space (IMS) are transferred via the dinuclear copper A center (CU(A)) of subunit 2 and heme A of subunit 1 to the active site in subunit 1, a binuclear center (BNC) formed by heme A3 and copper B (CU(B)). The BNC reduces molecular oxygen to 2 water molecules using 4 electrons from cytochrome c in the IMS and 4 protons from the mitochondrial matrix. This chain is Cytochrome c oxidase subunit 3 (mt-co3), found in Tetraodon nigroviridis (Spotted green pufferfish).